The following is a 126-amino-acid chain: Aspartate 1-decarboxylase (126 aa).

The active-site Schiff-base intermediate with substrate; via pyruvic acid is S25. S25 bears the Pyruvic acid (Ser) mark. T57 is a binding site for substrate. Y58 acts as the Proton donor in catalysis. 73–75 (GAA) contributes to the substrate binding site.

Belongs to the PanD family. Heterooctamer of four alpha and four beta subunits. Pyruvate is required as a cofactor. Is synthesized initially as an inactive proenzyme, which is activated by self-cleavage at a specific serine bond to produce a beta-subunit with a hydroxyl group at its C-terminus and an alpha-subunit with a pyruvoyl group at its N-terminus.

Its subcellular location is the cytoplasm. The catalysed reaction is L-aspartate + H(+) = beta-alanine + CO2. The protein operates within cofactor biosynthesis; (R)-pantothenate biosynthesis; beta-alanine from L-aspartate: step 1/1. Its function is as follows. Catalyzes the pyruvoyl-dependent decarboxylation of aspartate to produce beta-alanine. The polypeptide is Aspartate 1-decarboxylase (Yersinia pestis bv. Antiqua (strain Antiqua)).